We begin with the raw amino-acid sequence, 264 residues long: uncharacterized protein (264 aa).

Residues His-5, His-7, Glu-93, His-134, His-158, and Asp-208 each coordinate a divalent metal cation.

This sequence belongs to the metallo-dependent hydrolases superfamily. TatD-type hydrolase family. A divalent metal cation serves as cofactor.

This is an uncharacterized protein from Mycobacterium tuberculosis (strain ATCC 25618 / H37Rv).